The primary structure comprises 357 residues: MATTVPDGCRNGLKSKYYRLCDKAEAWGIVLETVATAGVVTSVAFMLTLPILVCKVQDSNRRKMLPTQFLFLLGVLGIFGLTFAFIIGLDGSTGPTRFFLFGILFSICFSCLLAHAVSLTKLVRGRKPLSLLVILGLAVGFSLVQDVIAIEYIVLTMNRTNVNVFSELSAPRRNEDFVLLLTYVLFLMALTFLMSSFTFCGSFTGWKRHGAHIYLTMLLSIAIWVAWITLLMLPDFDRRWDDTILSSALAANGWVFLLAYVSPEFWLLTKQRNPMDYPVEDAFCKPQLVKKSYGVENRAYSQEEITQGFEETGDTLYAPYSTHFQLQNQPPQKEFSIPRAHAWPSPYKDYEVKKEGS.

At 1–33 (MATTVPDGCRNGLKSKYYRLCDKAEAWGIVLET) the chain is on the extracellular side. The chain crosses the membrane as a helical span at residues 34-54 (VATAGVVTSVAFMLTLPILVC). The Cytoplasmic segment spans residues 55 to 68 (KVQDSNRRKMLPTQ). Residues 69–89 (FLFLLGVLGIFGLTFAFIIGL) form a helical membrane-spanning segment. At 90 to 97 (DGSTGPTR) the chain is on the extracellular side. Residues 98-118 (FFLFGILFSICFSCLLAHAVS) traverse the membrane as a helical segment. Over 119–129 (LTKLVRGRKPL) the chain is Cytoplasmic. The helical transmembrane segment at 130–150 (SLLVILGLAVGFSLVQDVIAI) threads the bilayer. At 151–176 (EYIVLTMNRTNVNVFSELSAPRRNED) the chain is on the extracellular side. The N-linked (GlcNAc...) asparagine glycan is linked to N158. A helical transmembrane segment spans residues 177–197 (FVLLLTYVLFLMALTFLMSSF). Residues 198–212 (TFCGSFTGWKRHGAH) lie on the Cytoplasmic side of the membrane. The chain crosses the membrane as a helical span at residues 213–233 (IYLTMLLSIAIWVAWITLLML). At 234–247 (PDFDRRWDDTILSS) the chain is on the extracellular side. Residues 248–268 (ALAANGWVFLLAYVSPEFWLL) traverse the membrane as a helical segment. The Cytoplasmic segment spans residues 269–357 (TKQRNPMDYP…KDYEVKKEGS (89 aa)). S301 carries the post-translational modification Phosphoserine. A phosphotyrosine mark is found at Y317 and Y320. At S345 the chain carries Phosphoserine. Y347 and Y350 each carry phosphotyrosine.

The protein belongs to the G-protein coupled receptor 3 family. As to quaternary structure, interacts (via its transmembrane domain) with EGFR. In terms of processing, phosphorylated in two conserved double-tyrosine motifs, Tyr-317/Tyr-320 and Tyr-347/Tyr-350, by EGFR; leading to inactivation of the tumor suppressive function of GPRC5A in lung cancer cells. Tyr-317 and Tyr-320 are the preferred residues responsible for EGFR-mediated GPRC5A phosphorylation. Expressed at high level in fetal and adult lung tissues but repressed in most human lung cancers. Constitutively expressed in fetal kidney and adult placenta, kidney, prostate, testis, ovary, small intestine, colon, stomach, and spinal cord at low to moderate levels. Not detectable in fetal heart, brain, and liver and adult heart, brain, liver, skeletal muscle, pancreas, spleen, thymus, and peripheral leukocytes. According to PubMed:10783259, expressed at low but detectable level in pancreas and heart.

The protein localises to the cell membrane. Its subcellular location is the cytoplasmic vesicle membrane. Orphan receptor. Could be involved in modulating differentiation and maintaining homeostasis of epithelial cells. This retinoic acid-inducible GPCR provide evidence for a possible interaction between retinoid and G-protein signaling pathways. Functions as a negative modulator of EGFR signaling. May act as a lung tumor suppressor. In Homo sapiens (Human), this protein is Retinoic acid-induced protein 3 (GPRC5A).